The following is a 113-amino-acid chain: Prefoldin subunit beta (113 aa).

This sequence belongs to the prefoldin subunit beta family. Heterohexamer of two alpha and four beta subunits.

The protein resides in the cytoplasm. Molecular chaperone capable of stabilizing a range of proteins. Seems to fulfill an ATP-independent, HSP70-like function in archaeal de novo protein folding. The sequence is that of Prefoldin subunit beta from Methanococcus maripaludis (strain C7 / ATCC BAA-1331).